The sequence spans 502 residues: MEHSIFPRSLWTNDSKILHHHVADFFSSVQVTQDIPAGTSFGPCVLHNTFYDTIAFIALKSFDKRNKSYVFRVDPEAMKGSPLVVPWLRLVQAAMSEEDQNTEAYLKGGQLHFRTIRDVKEGEELLVWYDEELSHLLGFRDIKAKALTDGYTCTRCGQAFKNENPFLAHCRFLCTQEKVDIIRPINQQKPEVKRHRKVIDFHNIARDLEDKMNTSSFEDTTILRKRKQEPFLTPKSKKTVLLEKTNITNESNTTNANKDCRAFRDLSEPTDNAQTNESKISKNSAFTEVRKAPEPSNPEKSSRDIMAPEVGLQSNCSAFSFVVPKSARSEQKSAFCEPSKRALAEAQNPSPPDTDNSLDSFKSKSSLGYRNVLASHLFPTDLAGSHSGGGMSAPLTSGGSYYYAPEHWTRAIGGQLQSTSSLTLLPPTFTPLGVSVQNWCAKCNLSFRMTSDLVFHMRSHHKKEFAAEAQVRRRREEKLTCPICHEYFRERHHLSRHMTSHN.

The SET domain occupies 8–130; that stretch reads RSLWTNDSKI…EGEELLVWYD (123 aa). S-adenosyl-L-methionine is bound at residue tyrosine 129. A C2H2-type 1; atypical zinc finger spans residues 151–174; sequence YTCTRCGQAFKNENPFLAHCRFLC. Disordered stretches follow at residues 267–303 and 338–361; these read SEPT…KSSR and PSKR…LDSF. Residues 269-286 show a composition bias toward polar residues; it reads PTDNAQTNESKISKNSAF. C2H2-type zinc fingers lie at residues 438–460 and 479–501; these read NWCA…MRSH and LTCP…MTSH.

This sequence belongs to the krueppel C2H2-type zinc-finger protein family. As to expression, expressed in pMN progenitors and oligodendrocyte lineage cells in the embryo with expression declining in oligodendrocytes undergoing differentiation.

It localises to the nucleus. In terms of biological role, transcriptional repressor. May have histone methyltransferase activity. Negatively regulates shh signaling activity in pMN progenitor cells which prevents their switch from motor neuron to oligodendrocyte precursor cell production. Independently of shh activity, also regulates oligodendrocyte formation. This chain is Zinc finger protein 488, found in Danio rerio (Zebrafish).